A 605-amino-acid chain; its full sequence is Mini-chromosome maintenance complex-binding protein (605 aa).

Residues serine 147 and serine 150 each carry the phosphoserine modification.

The protein belongs to the MCMBP family. As to quaternary structure, interacts with the MCM complex.

It localises to the nucleus. In terms of biological role, associated component of the MCM complex that acts as a regulator of DNA replication. Binds to the MCM complex during late S phase and may act by promoting the disassembly of the MCM complex from chromatin. This chain is Mini-chromosome maintenance complex-binding protein, found in Drosophila melanogaster (Fruit fly).